A 151-amino-acid chain; its full sequence is Deoxyuridine 5'-triphosphate nucleotidohydrolase (151 aa).

Substrate-binding positions include 70–72, N83, 87–89, and M97; these read RSG and LID.

The protein belongs to the dUTPase family. Homotrimer. Mg(2+) serves as cofactor.

It carries out the reaction dUTP + H2O = dUMP + diphosphate + H(+). Its pathway is pyrimidine metabolism; dUMP biosynthesis; dUMP from dCTP (dUTP route): step 2/2. This enzyme is involved in nucleotide metabolism: it produces dUMP, the immediate precursor of thymidine nucleotides and it decreases the intracellular concentration of dUTP so that uracil cannot be incorporated into DNA. The sequence is that of Deoxyuridine 5'-triphosphate nucleotidohydrolase from Escherichia fergusonii (strain ATCC 35469 / DSM 13698 / CCUG 18766 / IAM 14443 / JCM 21226 / LMG 7866 / NBRC 102419 / NCTC 12128 / CDC 0568-73).